Consider the following 199-residue polypeptide: dITP/XTP pyrophosphatase (199 aa).

7-12 (TGNAGK) provides a ligand contact to substrate. Positions 37 and 66 each coordinate Mg(2+). Catalysis depends on D66, which acts as the Proton acceptor. Residues S67, 146–149 (FGYD), K169, and 174–175 (HR) contribute to the substrate site.

Belongs to the HAM1 NTPase family. Homodimer. It depends on Mg(2+) as a cofactor.

The enzyme catalyses XTP + H2O = XMP + diphosphate + H(+). It catalyses the reaction dITP + H2O = dIMP + diphosphate + H(+). It carries out the reaction ITP + H2O = IMP + diphosphate + H(+). In terms of biological role, pyrophosphatase that catalyzes the hydrolysis of nucleoside triphosphates to their monophosphate derivatives, with a high preference for the non-canonical purine nucleotides XTP (xanthosine triphosphate), dITP (deoxyinosine triphosphate) and ITP. Seems to function as a house-cleaning enzyme that removes non-canonical purine nucleotides from the nucleotide pool, thus preventing their incorporation into DNA/RNA and avoiding chromosomal lesions. This Deinococcus geothermalis (strain DSM 11300 / CIP 105573 / AG-3a) protein is dITP/XTP pyrophosphatase.